A 450-amino-acid polypeptide reads, in one-letter code: Serine incorporator 2 (450 aa).

Transmembrane regions (helical) follow at residues 5–27 (LGACSLLSCASCLCGSAPCILCG), 40–57 (LLFTSFLFLGVLVSIIML), 96–118 (AVYRMCFATAAFFFFFMLLMICV), 131–150 (GFWFFKFLILVGITVGAFYI), 160–182 (FYFGVVGSFLFILIQLILFVDFA), 203–225 (AGLFFFTFLFYLLSIAAVALMFV), 238–257 (VFISLNLTFCVCVSIIAVLP), 264–286 (PNSGLLQASVITLYTMFVTWSAL), 315–337 (VWWDAPSIVGLVIFILCTFFISL), 380–402 (TYSYSFFHFCLVLASLHVMMTLT), and 417–439 (WTSVWVKICASWAGLFLYLWTLV).

The protein belongs to the TDE1 family.

Its subcellular location is the cell membrane. The catalysed reaction is a 1,2-diacyl-sn-glycero-3-phospho-L-serine(in) = a 1,2-diacyl-sn-glycero-3-phospho-L-serine(out). The enzyme catalyses a 1,2-diacyl-sn-glycero-3-phosphocholine(in) = a 1,2-diacyl-sn-glycero-3-phosphocholine(out). It catalyses the reaction a 1,2-diacyl-sn-glycero-3-phosphoethanolamine(in) = a 1,2-diacyl-sn-glycero-3-phosphoethanolamine(out). In terms of biological role, non-ATP-dependent, non-specific lipid transporter for phosphatidylserine, phosphatidylcholine, and phosphatidylethanolamine. Functions as a scramblase that flips lipids in both directions across the membrane. In contrast to SERINC3 and SERINC5, has no effect on gammaretrovirus particles infectivity. This chain is Serine incorporator 2 (Serinc2), found in Mus musculus (Mouse).